Reading from the N-terminus, the 355-residue chain is Nematocyst expressed protein 3 (355 aa).

The N-terminal stretch at 1–18 (MKLTYILLIAVVGVAIEA) is a signal peptide. 3 ShKT domains span residues 50 to 89 (CKDVADDCKAFGKLEKDDENSCFNNPDKARNECPVSCKLC), 107 to 134 (QPQQCSQQSCYETPQWSVQNCAVTCQLC), and 140 to 182 (SGPV…CNTY). Intrachain disulfides connect Cys50-Cys89, Cys57-Cys82, Cys71-Cys86, Cys116-Cys131, Cys149-Cys175, and Cys158-Cys179. A propeptide spanning residues 92–355 (KRSKKQSDYM…KKSKSHKKQH (264 aa)) is cleaved from the precursor. The disordered stretch occupies residues 202–355 (YQPNAMPTPP…KKSKSHKKQH (154 aa)). Pro residues predominate over residues 207–221 (MPTPPQGVTPAPLPP). Composition is skewed to low complexity over residues 222–232 (YFQQQGYGYPQ), 240–270 (VQPGQTQAPTAAQSTPAPVQTTPASGKTTTE), and 277–332 (TEAA…AQSD). Basic residues predominate over residues 335–355 (NKKKHKKDKAQKKSKSHKKQH).

It belongs to the NEP3 family. In terms of tissue distribution, nematocytes. In late planulae, transcripts are found throughout the ectoderm in nematocytes, with high concentration of expressing cells in the oral pole. In primary polyps, is expressed in nematocytes in the body wall and physa ectoderm and in the upper and lower pharynx.

The protein resides in the nematocyst. It is found in the secreted. Its function is as follows. Neurotoxin. In vivo, induces pronounced contraction and tail twitching on zebrafish larvae, as well as death 5 hours later. In Nematostella vectensis (Starlet sea anemone), this protein is Nematocyst expressed protein 3.